The primary structure comprises 415 residues: Beta-1,4-glucuronyltransferase 1 (415 aa).

Over 1-8 (MQMSYAIR) the chain is Cytoplasmic. The chain crosses the membrane as a helical; Signal-anchor for type II membrane protein span at residues 9–36 (CAFYQLLLAALMLVAMLQLLYLSLLSGL). Over 37–415 (HGQEEQDQYF…AKYPNSPRRC (379 aa)) the chain is Lumenal. A glycan (N-linked (GlcNAc...) asparagine) is linked at Asn204. Residues Asp227 and Asp229 each coordinate Mn(2+). A glycan (N-linked (GlcNAc...) asparagine) is linked at Asn300.

This sequence belongs to the glycosyltransferase 49 family. Interacts with LARGE1 and LARGE2. Requires Mn(2+) as cofactor.

It is found in the golgi apparatus membrane. It carries out the reaction 3-O-[beta-D-Xyl-(1-&gt;4)-Rib-ol-P-Rib-ol-P-3-beta-D-GalNAc-(1-&gt;3)-beta-D-GlcNAc-(1-&gt;4)-(O-6-P-alpha-D-Man)]-Thr-[protein] + UDP-alpha-D-glucuronate = 3-O-[beta-D-GlcA-(1-&gt;3)-beta-D-Xyl-(1-&gt;4)-Rib-ol-P-Rib-ol-P-3-beta-D-GalNAc-(1-&gt;3)-beta-D-GlcNAc-(1-&gt;4)-(O-6-P-alpha-D-Man)]-Thr-[protein] + UDP + H(+). Its pathway is protein modification; protein glycosylation. Beta-1,4-glucuronyltransferase involved in O-mannosylation of alpha-dystroglycan (DAG1). Transfers a glucuronic acid (GlcA) residue onto a xylose (Xyl) acceptor to produce the glucuronyl-beta-1,4-xylose-beta disaccharide primer, which is further elongated by LARGE1, during synthesis of phosphorylated O-mannosyl glycan. Phosphorylated O-mannosyl glycan is a carbohydrate structure present in alpha-dystroglycan (DAG1), which is required for binding laminin G-like domain-containing extracellular proteins with high affinity. Required for axon guidance; via its function in O-mannosylation of alpha-dystroglycan (DAG1). In Pongo abelii (Sumatran orangutan), this protein is Beta-1,4-glucuronyltransferase 1.